Reading from the N-terminus, the 258-residue chain is Indole-3-glycerol phosphate synthase (258 aa).

Belongs to the TrpC family.

The catalysed reaction is 1-(2-carboxyphenylamino)-1-deoxy-D-ribulose 5-phosphate + H(+) = (1S,2R)-1-C-(indol-3-yl)glycerol 3-phosphate + CO2 + H2O. It functions in the pathway amino-acid biosynthesis; L-tryptophan biosynthesis; L-tryptophan from chorismate: step 4/5. This chain is Indole-3-glycerol phosphate synthase, found in Legionella pneumophila (strain Paris).